The chain runs to 323 residues: Malate dehydrogenase (323 aa).

NAD(+) is bound by residues 20–25 (GAGRVG) and D44. Substrate is bound by residues R93 and R99. Residues N106 and 129–131 (VTN) contribute to the NAD(+) site. Substrate-binding residues include N131 and R162. H186 serves as the catalytic Proton acceptor.

The protein belongs to the LDH/MDH superfamily. MDH type 3 family.

The catalysed reaction is (S)-malate + NAD(+) = oxaloacetate + NADH + H(+). Catalyzes the reversible oxidation of malate to oxaloacetate. The polypeptide is Malate dehydrogenase (Nostoc sp. (strain PCC 7120 / SAG 25.82 / UTEX 2576)).